Reading from the N-terminus, the 634-residue chain is Chaperone protein HtpG (634 aa).

Residues 1-344 form an a; substrate-binding region; the sequence is MSETVSHNKE…SNDLPLNVSR (344 aa). The segment at 345 to 561 is b; it reads EILQDNKVTQ…DFEMGTQMAK (217 aa). The c stretch occupies residues 562 to 634; sequence LLEAAGQAVP…GAINKLLTKV (73 aa).

This sequence belongs to the heat shock protein 90 family. In terms of assembly, homodimer.

It is found in the cytoplasm. Molecular chaperone. Has ATPase activity. This chain is Chaperone protein HtpG, found in Vibrio campbellii (strain ATCC BAA-1116).